The sequence spans 229 residues: Large ribosomal subunit protein uL1 (229 aa).

It belongs to the universal ribosomal protein uL1 family. In terms of assembly, part of the 50S ribosomal subunit.

Functionally, binds directly to 23S rRNA. The L1 stalk is quite mobile in the ribosome, and is involved in E site tRNA release. In terms of biological role, protein L1 is also a translational repressor protein, it controls the translation of the L11 operon by binding to its mRNA. The protein is Large ribosomal subunit protein uL1 of Rhodopseudomonas palustris (strain HaA2).